A 535-amino-acid chain; its full sequence is Portal protein (535 aa).

The protein belongs to the podoviridae portal protein family. Homododecamer. Interacts with major capsid protein. Interacts with the tail tube proteins gp11 and gp12. Interacts with the terminase large subunit. Interacts with the internal virion protein gp14.

The protein resides in the virion. Forms the portal vertex of the capsid. This portal plays critical roles in head assembly, genome packaging, neck/tail attachment, and genome ejection. The portal protein multimerizes as a single ring-shaped homododecamer arranged around a central channel. In Enterobacteria phage T3 (Bacteriophage T3), this protein is Portal protein (8).